The chain runs to 50 residues: Defensin D2 (50 aa).

4 disulfide bridges follow: C3–C50, C14–C35, C20–C44, and C24–C46.

In terms of processing, contains 4 disulfide bonds.

The protein localises to the secreted. Functionally, antimicrobial peptide active against fungi, Gram-positive and Gram-negative bacteria. Inhibits growth of hyphae in the fungi A.niger (IC(50)=3.5 ug/ml), B.sorokiniana (IC(50)=1.8 ug/ml), F.oxysporum (IC(50)=5.3 ug/ml), F.graminearum (IC(50)=6.9 ug/ml), F.culmorum (IC(50)=6.9 ug/ml) and B.cinerea (IC(50)=13.7 ug/ml). Has no effect on spore germination. Destroys spores in germinated conidia by disruption of cell walls and membranes in A.niger and B.sorokiniana. Causes vacuolization of germinated macro- and microconidia in F.oxysporum, F.graminearum and F.culmorum. Strongly inhibits growth of P.infestans on potato tubers above concentrations of 3.4 ug/ml. Inhibits growth of Gram-positive bacteria C.michiganensis and B.subtilis and of Gram-negative bacteria P.syringae, E.carotovora and E.coli. In Nigella sativa (Black cumin), this protein is Defensin D2.